Here is a 115-residue protein sequence, read N- to C-terminus: Large ribosomal subunit protein bL19 (115 aa).

This sequence belongs to the bacterial ribosomal protein bL19 family.

Functionally, this protein is located at the 30S-50S ribosomal subunit interface and may play a role in the structure and function of the aminoacyl-tRNA binding site. This is Large ribosomal subunit protein bL19 from Nitratidesulfovibrio vulgaris (strain ATCC 29579 / DSM 644 / CCUG 34227 / NCIMB 8303 / VKM B-1760 / Hildenborough) (Desulfovibrio vulgaris).